Reading from the N-terminus, the 122-residue chain is Large ribosomal subunit protein uL14c (122 aa).

Belongs to the universal ribosomal protein uL14 family. As to quaternary structure, part of the 50S ribosomal subunit.

The protein localises to the plastid. The protein resides in the chloroplast. In terms of biological role, binds to 23S rRNA. The chain is Large ribosomal subunit protein uL14c from Arabis hirsuta (Hairy rock-cress).